We begin with the raw amino-acid sequence, 172 residues long: Shikimate kinase (172 aa).

ATP is bound at residue 14 to 19; that stretch reads GAGKST. S18 contributes to the Mg(2+) binding site. Substrate-binding residues include D36, R60, and G82. Position 120 (R120) interacts with ATP. R139 is a binding site for substrate. Q156 serves as a coordination point for ATP.

The protein belongs to the shikimate kinase family. As to quaternary structure, monomer. The cofactor is Mg(2+).

It localises to the cytoplasm. The enzyme catalyses shikimate + ATP = 3-phosphoshikimate + ADP + H(+). It participates in metabolic intermediate biosynthesis; chorismate biosynthesis; chorismate from D-erythrose 4-phosphate and phosphoenolpyruvate: step 5/7. Its function is as follows. Catalyzes the specific phosphorylation of the 3-hydroxyl group of shikimic acid using ATP as a cosubstrate. This Aliivibrio salmonicida (strain LFI1238) (Vibrio salmonicida (strain LFI1238)) protein is Shikimate kinase.